A 118-amino-acid polypeptide reads, in one-letter code: Phosphoribosyl-AMP cyclohydrolase (118 aa).

D87 provides a ligand contact to Mg(2+). Position 88 (C88) interacts with Zn(2+). 2 residues coordinate Mg(2+): D89 and D91. Residues C104 and C111 each coordinate Zn(2+).

It belongs to the PRA-CH family. In terms of assembly, homodimer. The cofactor is Mg(2+). Zn(2+) is required as a cofactor.

The protein localises to the cytoplasm. The enzyme catalyses 1-(5-phospho-beta-D-ribosyl)-5'-AMP + H2O = 1-(5-phospho-beta-D-ribosyl)-5-[(5-phospho-beta-D-ribosylamino)methylideneamino]imidazole-4-carboxamide. It functions in the pathway amino-acid biosynthesis; L-histidine biosynthesis; L-histidine from 5-phospho-alpha-D-ribose 1-diphosphate: step 3/9. In terms of biological role, catalyzes the hydrolysis of the adenine ring of phosphoribosyl-AMP. The polypeptide is Phosphoribosyl-AMP cyclohydrolase (Corynebacterium glutamicum (strain ATCC 13032 / DSM 20300 / JCM 1318 / BCRC 11384 / CCUG 27702 / LMG 3730 / NBRC 12168 / NCIMB 10025 / NRRL B-2784 / 534)).